We begin with the raw amino-acid sequence, 679 residues long: Stress-70 protein, mitochondrial (679 aa).

Residues 1–46 (MISATRAAAARLVGTAASRTPAAARHQDGWNGLSHEAFRFVSRRDY) constitute a mitochondrion transit peptide. The segment at 1 to 432 (MISATRAAAA…IQGGVLAGDV (432 aa)) is interaction with NFS1. Positions 63 and 64 each coordinate ADP. The nucleotide-binding domain (NBD) stretch occupies residues 63 to 431 (TNSCVAVMEG…AIQGGVLAGD (369 aa)). Residue lysine 76 is modified to N6-acetyllysine. Threonine 87 is modified (phosphothreonine). An N6-acetyllysine; alternate mark is found at lysine 135 and lysine 138. Residues lysine 135 and lysine 138 each carry the N6-succinyllysine; alternate modification. Lysine 143 is modified (N6-acetyllysine). Position 206 is an N6-acetyllysine; alternate (lysine 206). Residue lysine 206 is modified to N6-succinyllysine; alternate. Lysine 206 carries the N6-malonyllysine; alternate modification. N6-acetyllysine is present on residues lysine 234 and lysine 288. The residue at position 300 (lysine 300) is an N6-acetyllysine; alternate. Lysine 300 is modified (N6-succinyllysine; alternate). ADP contacts are provided by glutamate 313, lysine 316, and serine 320. Lysine 360 carries the N6-acetyllysine; alternate modification. Residue lysine 360 is modified to N6-succinyllysine; alternate. The residue at position 368 (lysine 368) is an N6-succinyllysine. ADP contacts are provided by glycine 388 and arginine 391. Lysine 394 carries the post-translational modification N6-succinyllysine. Residue serine 408 is modified to Phosphoserine. The interval 432–441 (VTDVLLLDVT) is interdomain linker. Positions 432–679 (VTDVLLLDVT…QKEDQKEEKQ (248 aa)) are interaction with FXN and ISCU. Residues 442 to 679 (PLSLGIETLG…QKEDQKEEKQ (238 aa)) form a substrate-binding domain (SBD) region. An Omega-N-methylarginine modification is found at arginine 513. Lysine 567 and lysine 600 each carry N6-acetyllysine; alternate. Residues lysine 567 and lysine 600 each carry the N6-succinyllysine; alternate modification. An N6-succinyllysine modification is found at lysine 610. An N6-acetyllysine modification is found at lysine 612. Residue lysine 646 is modified to N6-acetyllysine; alternate. Residue lysine 646 is modified to N6-succinyllysine; alternate. Positions 656 to 679 (ASEREGSGSSGTGEQKEDQKEEKQ) are disordered. The span at 669–679 (EQKEDQKEEKQ) shows a compositional bias: basic and acidic residues.

It belongs to the heat shock protein 70 family. In terms of assembly, interacts strongly with the intermediate form of FXN and weakly with its mature form. Interacts with HSCB. Associates with the mitochondrial contact site and cristae organizing system (MICOS) complex, composed of at least MICOS10/MIC10, CHCHD3/MIC19, CHCHD6/MIC25, APOOL/MIC27, IMMT/MIC60, APOO/MIC23/MIC26 and QIL1/MIC13. This complex was also known under the names MINOS or MitOS complex. The MICOS complex associates with mitochondrial outer membrane proteins SAMM50, MTX1, MTX2 and DNAJC11, mitochondrial inner membrane protein TMEM11 and with HSPA9. Interacts with DNLZ, the interaction is required to prevent self-aggregation. Interacts with TESPA1. Interacts with PDPN. Interacts with NFU1, NFS1 and ISCU. Interacts with TP53; the interaction promotes TP53 degradation. Interacts (via SBD domain) with UBXN2A; the interaction with UBXN2A inhibits HSPA9/MOT-2 interaction with and degradation of TP53, thereby promotes TP53 translocation to the nucleus. Interacts with ITPR1 AND VDAC1; this interaction couples ITPR1 to VDAC1. Component of the TIM23 mitochondrial inner membrane pre-sequence translocase complex.

Its subcellular location is the mitochondrion. The protein localises to the nucleus. It localises to the nucleolus. It is found in the cytoplasm. The protein resides in the mitochondrion matrix. It catalyses the reaction ATP + H2O = ADP + phosphate + H(+). Its activity is regulated as follows. The chaperone activity is regulated by ATP-induced allosteric coupling of the nucleotide-binding (NBD) and substrate-binding (SBD) domains. ATP binding in the NBD leads to a conformational change in the NBD, which is transferred through the interdomain linker (IDL) to the substrate-binding domain (SBD). This elicits a reduced substrate affinity and a faster substrate exchange rate. Upon hydrolysis of ATP to ADP, the protein undergoes a conformational change that increases its affinity for substrate proteins. It cycles through repeated phases of ATP hydrolysis and nucleotide exchange, facilitating repeated cycles of substrate binding and release. Functions in collaboration with co-chaperones. Functions with the co-chaperone, DNLZ, to maintain solubility and regulate ATP hydrolysis. Nucleotide exchange factors, GRPEL1 and GRPEL2, accelerate nucleotide exchange. Functionally, mitochondrial chaperone that plays a key role in mitochondrial protein import, folding, and assembly. Plays an essential role in the protein quality control system, the correct folding of proteins, the re-folding of misfolded proteins, and the targeting of proteins for subsequent degradation. These processes are achieved through cycles of ATP binding, ATP hydrolysis, and ADP release, mediated by co-chaperones. In mitochondria, it associates with the TIM (translocase of the inner membrane) protein complex to assist in the import and folding of mitochondrial proteins. Plays an important role in mitochondrial iron-sulfur cluster (ISC) biogenesis, interacts with and stabilizes ISC cluster assembly proteins FXN, NFU1, NFS1 and ISCU. Regulates erythropoiesis via stabilization of ISC assembly. Regulates mitochondrial calcium-dependent apoptosis by coupling two calcium channels, ITPR1 and VDAC1, at the mitochondria-associated endoplasmic reticulum (ER) membrane to facilitate calcium transport from the ER lumen to the mitochondria intermembrane space, providing calcium for the downstream calcium channel MCU, which releases it into the mitochondrial matrix. Although primarily located in the mitochondria, it is also found in other cellular compartments. In the cytosol, it associates with proteins involved in signaling, apoptosis, or senescence. It may play a role in cell cycle regulation via its interaction with and promotion of degradation of TP53. May play a role in the control of cell proliferation and cellular aging. Protects against reactive oxygen species (ROS). Extracellular HSPA9 plays a cytoprotective role by preventing cell lysis following immune attack by the membrane attack complex by disrupting formation of the complex. This is Stress-70 protein, mitochondrial from Cricetulus griseus (Chinese hamster).